Reading from the N-terminus, the 347-residue chain is Quinolinate synthase (347 aa).

The iminosuccinate site is built by histidine 47 and serine 68. Residue cysteine 113 coordinates [4Fe-4S] cluster. Iminosuccinate contacts are provided by residues 139–141 (YAN) and serine 156. [4Fe-4S] cluster is bound at residue cysteine 200. Iminosuccinate is bound by residues 226–228 (HPE) and threonine 243. Cysteine 297 is a binding site for [4Fe-4S] cluster.

It belongs to the quinolinate synthase family. Type 1 subfamily. It depends on [4Fe-4S] cluster as a cofactor.

It localises to the cytoplasm. It carries out the reaction iminosuccinate + dihydroxyacetone phosphate = quinolinate + phosphate + 2 H2O + H(+). It participates in cofactor biosynthesis; NAD(+) biosynthesis; quinolinate from iminoaspartate: step 1/1. In terms of biological role, catalyzes the condensation of iminoaspartate with dihydroxyacetone phosphate to form quinolinate. The protein is Quinolinate synthase of Escherichia coli O7:K1 (strain IAI39 / ExPEC).